The chain runs to 425 residues: Adenylosuccinate synthetase (425 aa).

GTP contacts are provided by residues 12–18 (GDEGKGK) and 40–42 (GHT). Residue D13 is the Proton acceptor of the active site. D13 and G40 together coordinate Mg(2+). IMP is bound by residues 13–16 (DEGK), 38–41 (NAGH), T127, R141, Q222, T237, and R301. The Proton donor role is filled by H41. Position 297–303 (297–303 (AVTGRPR)) interacts with substrate. Residues R303, 329–331 (KID), and 411–413 (SVG) each bind GTP.

The protein belongs to the adenylosuccinate synthetase family. In terms of assembly, homodimer. The cofactor is Mg(2+).

The protein resides in the cytoplasm. The enzyme catalyses IMP + L-aspartate + GTP = N(6)-(1,2-dicarboxyethyl)-AMP + GDP + phosphate + 2 H(+). Its pathway is purine metabolism; AMP biosynthesis via de novo pathway; AMP from IMP: step 1/2. In terms of biological role, plays an important role in the de novo pathway of purine nucleotide biosynthesis. Catalyzes the first committed step in the biosynthesis of AMP from IMP. The polypeptide is Adenylosuccinate synthetase (Fusobacterium nucleatum).